The following is a 255-amino-acid chain: Ribonuclease PH (255 aa).

Phosphate-binding positions include arginine 86 and 124–126 (GTR).

The protein belongs to the RNase PH family. As to quaternary structure, homohexameric ring arranged as a trimer of dimers.

It catalyses the reaction tRNA(n+1) + phosphate = tRNA(n) + a ribonucleoside 5'-diphosphate. Functionally, phosphorolytic 3'-5' exoribonuclease that plays an important role in tRNA 3'-end maturation. Removes nucleotide residues following the 3'-CCA terminus of tRNAs; can also add nucleotides to the ends of RNA molecules by using nucleoside diphosphates as substrates, but this may not be physiologically important. Probably plays a role in initiation of 16S rRNA degradation (leading to ribosome degradation) during starvation. The chain is Ribonuclease PH from Geobacillus thermodenitrificans (strain NG80-2).